We begin with the raw amino-acid sequence, 589 residues long: Aspartate--tRNA ligase (589 aa).

Residue Glu175 participates in L-aspartate binding. The interval Gln199 to Lys202 is aspartate. Arg221 contacts L-aspartate. ATP-binding positions include Arg221 to Glu223 and Gln230. An L-aspartate-binding site is contributed by His449. Glu483 lines the ATP pocket. Arg490 lines the L-aspartate pocket. Gly535–Arg538 lines the ATP pocket.

The protein belongs to the class-II aminoacyl-tRNA synthetase family. Type 1 subfamily. Homodimer.

The protein resides in the cytoplasm. It carries out the reaction tRNA(Asp) + L-aspartate + ATP = L-aspartyl-tRNA(Asp) + AMP + diphosphate. Catalyzes the attachment of L-aspartate to tRNA(Asp) in a two-step reaction: L-aspartate is first activated by ATP to form Asp-AMP and then transferred to the acceptor end of tRNA(Asp). The protein is Aspartate--tRNA ligase of Lysinibacillus sphaericus (strain C3-41).